Reading from the N-terminus, the 153-residue chain is Protein E6 (153 aa).

2 zinc fingers span residues 33 to 69 and 106 to 142; these read CVYC…CNFC and CYRC…CLQC. The PDZ-binding domain signature appears at 151–153; it reads TAV.

The protein belongs to the papillomaviridae E6 protein family. As to quaternary structure, forms homodimers. Interacts with ubiquitin-protein ligase UBE3A/E6-AP and thus forms a complex with human TP53. Interacts with human NFX1 and MAGI3. Interacts with human IRF3; this interaction inhibits the establishment of antiviral state. Interacts with human TYK2; this interaction inhibits JAK-STAT activation by interferon alpha. Interacts with host DLG1; this interaction leads to the proteasomal degradation of DLG1.

The protein resides in the host cytoplasm. It localises to the host nucleus. Plays a major role in the induction and maintenance of cellular transformation. Acts mainly as an oncoprotein by stimulating the destruction of many host cell key regulatory proteins. E6 associates with host UBE3A/E6-AP ubiquitin-protein ligase, and inactivates tumor suppressors TP53 and TP73 by targeting them to the 26S proteasome for degradation. In turn, DNA damage and chromosomal instabilities increase and lead to cell proliferation and cancer development. The complex E6/E6AP targets several other substrates to degradation via the proteasome including host DLG1 or NFX1, a repressor of human telomerase reverse transcriptase (hTERT). The resulting increased expression of hTERT prevents the shortening of telomere length leading to cell immortalization. Other cellular targets including BAK1, Fas-associated death domain-containing protein (FADD) and procaspase 8, are degraded by E6/E6AP causing inhibition of apoptosis. E6 also inhibits immune response by interacting with host IRF3 and TYK2. These interactions prevent IRF3 transcriptional activities and inhibit TYK2-mediated JAK-STAT activation by interferon alpha resulting in inhibition of the interferon signaling pathway. The chain is Protein E6 from Homo sapiens (Human).